Consider the following 105-residue polypeptide: Small cysteine and glycine repeat-containing protein 6 (105 aa).

Residues 4 to 83 (CGCGGCGGGC…HSCGCGCGCG (80 aa)) are 13 X 2 AA repeats of CG.

Belongs to the KRTAP type 28 family.

Its function is as follows. In the hair cortex, hair keratin intermediate filaments are embedded in an interfilamentous matrix, consisting of hair keratin-associated proteins (KRTAP), which are essential for the formation of a rigid and resistant hair shaft through their extensive disulfide bond cross-linking with abundant cysteine residues of hair keratins. The matrix proteins include the high-sulfur and high-glycine-tyrosine keratins. The sequence is that of Small cysteine and glycine repeat-containing protein 6 from Homo sapiens (Human).